A 315-amino-acid chain; its full sequence is Serpentine receptor class delta-31 (315 aa).

The next 7 membrane-spanning stretches (helical) occupy residues 6-26 (LHSI…YLAI), 38-58 (AIIT…FFVM), 83-103 (ACYV…IWMI), 124-144 (VFVA…WFSI), 174-194 (ITLI…YIWI), 225-245 (FQVF…SMFT), and 256-276 (AISV…ILFV).

It belongs to the nematode receptor-like protein srd family.

It is found in the membrane. The chain is Serpentine receptor class delta-31 (srd-31) from Caenorhabditis elegans.